The chain runs to 261 residues: Methyltransferase nsrG (261 aa).

A methyltransferase domain region spans residues 49–141; that stretch reads DVGAGNGPYA…AHQLRPGALF (93 aa).

Belongs to the methyltransferase superfamily.

Its pathway is secondary metabolite biosynthesis. In terms of biological role, methyltransferase; part of the gene cluster that mediates the biosynthesis of the tetrahydroxanthone dimer neosartorin, which exhibits antibacterial activity. The two different monomeric units appear to be synthesized by the same set of enzymes, among which the Baeyer-Villiger monooxygenase nsrF is the key enzyme for the divergence of the biosynthetic routes. The pathway begins with the synthesis of atrochrysone thioester by the polyketide synthase nsrB. The atrochrysone carboxyl ACP thioesterase nsrC then breaks the thioester bond and releases the atrochrysone carboxylic acid from AacuL. Atrochrysone carboxylic acid is decarboxylated by the decarboxylase nsrE, and oxidized by the anthrone oxygenase nsrD to yield emodin. Emodin is then reduced to emodin hydroquinone by the oxidoreductase nsrR. A-ring reduction by the short chain dehydrogenase nsrJ, dehydration by the scytalone dehydratase-like protein nsrI and probable spontaneous re-oxidation, results in overall deoxygenation to chrysophanol. The Baeyer-Villiger monooxygenase nsrF accepts chrysophanol as a substrate to insert one oxygen atom at two different positions to yield the precursors of both monomric units. NsrF is promiscuous/flexible in interacting with the 2 (non methylated and methylated) aromatic rings of chrysophanol, thus diverging the biosynthetic pathway at this point. After the hydrolysis of the lactones, methylesterification by the methyltransferase nsrG yields respectively moniliphenone and 2,2',6'-trihydroxy-4-methyl-6-methoxya-cyldiphenylmethanone. The next steps are the hydroxylation by the FAD-dependent monooxygenase nsrK, followed by isomerization by the monooxygenase nsrQ. The short chain dehydrogenase/reductase nsrO then catalyzes the C-5 ketoreduction to give the xanthone skeleton of blennolide C and 5-acetylblennolide A. The acetyltransferase nsrL has a strict substrate specificity and uses only blennolide A but not blennolide C to yield 5-acetylblennolide A as the single-acetylated product. In the final step of the biosynthesis, the heterodimerization of the 2 xanthones, blennolide C and 5-acetylblennolide A, is catalyzed by the cytochrome P450 monooxygenase nsrP. NsrP can utilize at least three different xanthones as its substrates to perform the dimerization reaction. This Aspergillus novofumigatus (strain IBT 16806) protein is Methyltransferase nsrG.